We begin with the raw amino-acid sequence, 287 residues long: Probable WRKY transcription factor 57 (287 aa).

Positions 86 to 99 (TSTNNNPSATSSSS) are enriched in low complexity. The disordered stretch occupies residues 86-137 (TSTNNNPSATSSSSEDPAENSTASAEKTPPPETPVKEKKKAQKRIRQPRFAF). The segment covering 122–132 (EKKKAQKRIRQ) has biased composition (basic residues). The segment at residues 141–206 (SDVDNLEDGY…YEGQHCHQTI (66 aa)) is a DNA-binding region (WRKY). Residues 248-287 (DNNAPSPRLPRPTTEDTPAVSTPSEEGLLGDIVPQTMRNP) are disordered. Positions 262 to 271 (EDTPAVSTPS) are enriched in polar residues.

Belongs to the WRKY group II-c family.

The protein resides in the nucleus. In terms of biological role, transcription factor. Interacts specifically with the W box (5'-(T)TGAC[CT]-3'), a frequently occurring elicitor-responsive cis-acting element. In Arabidopsis thaliana (Mouse-ear cress), this protein is Probable WRKY transcription factor 57 (WRKY57).